The primary structure comprises 595 residues: Polyadenylate-binding protein-interacting protein 4 (595 aa).

Residues 48-113 (RLVYFTTCKI…SRSEFVRKPP (66 aa)) form the Sm domain. Polar residues-rich tracts occupy residues 302 to 313 (GGSSTSDGQKPA) and 326 to 346 (GDSQ…TSKQ). Disordered stretches follow at residues 302–505 (GGSS…FYYP) and 536–595 (MYHP…KGRE). The span at 364-382 (DEQRRKNNEEVSHNNRSAE) shows a compositional bias: basic and acidic residues. Positions 416–465 (SQVSSKTKSESSFGQSASRSSESRPGPSTSSRPGLSPSSSIGSMASSEKS) are enriched in low complexity. Residues 466–474 (TLNPNAKEF) carry the PAM2-like 1; degenerate motif. The PAM2-like 2 motif lies at 475 to 485 (KLNPKAKSFKP). Low complexity-rich tracts occupy residues 488-501 (SAAA…ADAS) and 548-570 (QPQY…PGQQ).

As to expression, expressed in cauline leaves, stems, rosette leaves, immature siliques and primary inflorescences.

This Arabidopsis thaliana (Mouse-ear cress) protein is Polyadenylate-binding protein-interacting protein 4 (CID4).